A 333-amino-acid chain; its full sequence is Pollen allergen KBG 41 (333 aa).

A signal peptide spans 1–23 (MAVHQYTVALFLAVALVAGPAAS). 2 tandem repeats follow at residues 309–320 (TGAATAAAGGYK) and 321–332 (TGAATPTAGGYK). The 2 X 12 AA tandem repeats stretch occupies residues 309–332 (TGAATAAAGGYKTGAATPTAGGYK).

The protein belongs to the Poa p IX/Phl p VI allergen family. In terms of tissue distribution, pollen.

The polypeptide is Pollen allergen KBG 41 (Poa pratensis (Kentucky bluegrass)).